We begin with the raw amino-acid sequence, 228 residues long: Response regulator MprA (228 aa).

The 115-residue stretch at Arg-2–Leu-116 folds into the Response regulatory domain. Asp-46 carries the post-translational modification 4-aspartylphosphate. A DNA-binding region (ompR/PhoB-type) is located at residues Ser-127 to Glu-225.

Post-translationally, phosphorylated and dephosphorylated by MprB.

Its subcellular location is the cytoplasm. Functionally, member of the two-component regulatory system MprB/MprA which contributes to maintaining a balance among several systems involved in stress resistance and is required for establishment and maintenance of persistent infection in the host. Functions as a transcriptional regulator that recognizes a 19-bp nucleotide motif comprizing two loosely conserved 8-bp direct DNA-binding motif repeats separated by a 3-bp spacer region. The polypeptide is Response regulator MprA (mprA) (Mycobacterium avium (strain 104)).